Reading from the N-terminus, the 61-residue chain is Large ribosomal subunit protein uL30 (61 aa).

Belongs to the universal ribosomal protein uL30 family. As to quaternary structure, part of the 50S ribosomal subunit.

The sequence is that of Large ribosomal subunit protein uL30 from Maricaulis maris (strain MCS10) (Caulobacter maris).